A 338-amino-acid polypeptide reads, in one-letter code: D-erythrose-4-phosphate dehydrogenase (338 aa).

Position 12–13 (arginine 12–isoleucine 13) interacts with NAD(+). Substrate contacts are provided by residues serine 154–threonine 156, arginine 200, threonine 213–lysine 214, and arginine 236. The active-site Nucleophile is cysteine 155. Asparagine 318 contacts NAD(+).

This sequence belongs to the glyceraldehyde-3-phosphate dehydrogenase family. Epd subfamily. In terms of assembly, homotetramer.

Its subcellular location is the cytoplasm. The enzyme catalyses D-erythrose 4-phosphate + NAD(+) + H2O = 4-phospho-D-erythronate + NADH + 2 H(+). Its pathway is cofactor biosynthesis; pyridoxine 5'-phosphate biosynthesis; pyridoxine 5'-phosphate from D-erythrose 4-phosphate: step 1/5. Functionally, catalyzes the NAD-dependent conversion of D-erythrose 4-phosphate to 4-phosphoerythronate. In Yersinia pestis bv. Antiqua (strain Antiqua), this protein is D-erythrose-4-phosphate dehydrogenase.